The following is a 213-amino-acid chain: MEQGEKQVMEQATYDEPEREQPIEEEAAPQPEEESGGVPLEEAGGEEAAEPAEKAPTAEELAAAKAQIAELEAKLSEMEHRYLRLYADFENFRRRTRQEMEAAEKYRAQSLASDLLPVLDNFERALKIETDNEQAKSILQGMEMVYRSLVDALKKEGVEAIEAVGKPFDPYLHQAVMQAEAEGYEPNTVVEELQKGYKLKDRVLRPAMVKVSQ.

The interval 1–61 (MEQGEKQVME…AEKAPTAEEL (61 aa)) is disordered. Residues 13 to 35 (TYDEPEREQPIEEEAAPQPEEES) are compositionally biased toward acidic residues.

It belongs to the GrpE family. As to quaternary structure, homodimer.

The protein localises to the cytoplasm. Its function is as follows. Participates actively in the response to hyperosmotic and heat shock by preventing the aggregation of stress-denatured proteins, in association with DnaK and GrpE. It is the nucleotide exchange factor for DnaK and may function as a thermosensor. Unfolded proteins bind initially to DnaJ; upon interaction with the DnaJ-bound protein, DnaK hydrolyzes its bound ATP, resulting in the formation of a stable complex. GrpE releases ADP from DnaK; ATP binding to DnaK triggers the release of the substrate protein, thus completing the reaction cycle. Several rounds of ATP-dependent interactions between DnaJ, DnaK and GrpE are required for fully efficient folding. The protein is Protein GrpE of Geobacillus kaustophilus (strain HTA426).